The primary structure comprises 415 residues: Serine/threonine transporter SstT (415 aa).

8 consecutive transmembrane segments (helical) span residues 15–35 (GSLV…AWLA), 45–65 (LGTL…WILV), 85–105 (ILYI…SFIF), 142–162 (ALLN…GIAL), 193–213 (VGIF…ALLG), 217–237 (LLVV…PLIV), 301–321 (GAAV…GIPV), and 331–351 (VVSA…LLLI).

It belongs to the dicarboxylate/amino acid:cation symporter (DAACS) (TC 2.A.23) family.

It is found in the cell inner membrane. The enzyme catalyses L-serine(in) + Na(+)(in) = L-serine(out) + Na(+)(out). It catalyses the reaction L-threonine(in) + Na(+)(in) = L-threonine(out) + Na(+)(out). Involved in the import of serine and threonine into the cell, with the concomitant import of sodium (symport system). This chain is Serine/threonine transporter SstT, found in Photorhabdus laumondii subsp. laumondii (strain DSM 15139 / CIP 105565 / TT01) (Photorhabdus luminescens subsp. laumondii).